The following is a 388-amino-acid chain: LL-diaminopimelate aminotransferase (388 aa).

Substrate-binding residues include tyrosine 15 and glycine 40. Pyridoxal 5'-phosphate-binding positions include tyrosine 69, 103–104 (SK), tyrosine 128, asparagine 178, tyrosine 209, and 237–239 (SLS). Residues lysine 104, tyrosine 128, and asparagine 178 each contribute to the substrate site. An N6-(pyridoxal phosphate)lysine modification is found at lysine 240. Arginine 248 is a pyridoxal 5'-phosphate binding site. Arginine 366 lines the substrate pocket.

The protein belongs to the class-I pyridoxal-phosphate-dependent aminotransferase family. LL-diaminopimelate aminotransferase subfamily. Homodimer. Pyridoxal 5'-phosphate serves as cofactor.

It catalyses the reaction (2S,6S)-2,6-diaminopimelate + 2-oxoglutarate = (S)-2,3,4,5-tetrahydrodipicolinate + L-glutamate + H2O + H(+). The protein operates within amino-acid biosynthesis; L-lysine biosynthesis via DAP pathway; LL-2,6-diaminopimelate from (S)-tetrahydrodipicolinate (aminotransferase route): step 1/1. Its function is as follows. Involved in the synthesis of meso-diaminopimelate (m-DAP or DL-DAP), required for both lysine and peptidoglycan biosynthesis. Catalyzes the direct conversion of tetrahydrodipicolinate to LL-diaminopimelate. Can also use m-DAP instead of LL-DAP as the amino-group donor. The protein is LL-diaminopimelate aminotransferase of Syntrophobacter fumaroxidans (strain DSM 10017 / MPOB).